We begin with the raw amino-acid sequence, 156 residues long: Small ribosomal subunit protein uS7 (156 aa).

Belongs to the universal ribosomal protein uS7 family. In terms of assembly, part of the 30S ribosomal subunit. Contacts proteins S9 and S11.

In terms of biological role, one of the primary rRNA binding proteins, it binds directly to 16S rRNA where it nucleates assembly of the head domain of the 30S subunit. Is located at the subunit interface close to the decoding center, probably blocks exit of the E-site tRNA. The protein is Small ribosomal subunit protein uS7 of Bacillus cytotoxicus (strain DSM 22905 / CIP 110041 / 391-98 / NVH 391-98).